We begin with the raw amino-acid sequence, 348 residues long: Casein kinase II subunit alpha (348 aa).

Residues tyrosine 55–phenylalanine 340 form the Protein kinase domain. Residues isoleucine 61 to valine 69 and lysine 84 each bind ATP. The active-site Proton acceptor is the aspartate 172.

The protein belongs to the protein kinase superfamily. Ser/Thr protein kinase family. CK2 subfamily. In terms of assembly, tetramer of two alpha and two beta chains.

Its subcellular location is the cytoplasm. It catalyses the reaction L-seryl-[protein] + ATP = O-phospho-L-seryl-[protein] + ADP + H(+). It carries out the reaction L-threonyl-[protein] + ATP = O-phospho-L-threonyl-[protein] + ADP + H(+). Functionally, casein kinases are operationally defined by their preferential utilization of acidic proteins such as caseins as substrates. The alpha chain contains the catalytic site. In Theileria annulata, this protein is Casein kinase II subunit alpha.